Consider the following 107-residue polypeptide: Ubiquitin-related modifier 1 (107 aa).

G107 is subject to 1-thioglycine. Residue G107 forms a Glycyl lysine isopeptide (Gly-Lys) (interchain with K-? in acceptor proteins) linkage.

The protein belongs to the URM1 family. In terms of processing, C-terminal thiocarboxylation occurs in 2 steps, it is first acyl-adenylated (-COAMP) via the hesA/moeB/thiF part of UBA4, then thiocarboxylated (-COSH) via the rhodanese domain of UBA4.

Its subcellular location is the cytoplasm. It participates in tRNA modification; 5-methoxycarbonylmethyl-2-thiouridine-tRNA biosynthesis. In terms of biological role, acts as a sulfur carrier required for 2-thiolation of mcm(5)S(2)U at tRNA wobble positions of cytosolic tRNA(Lys), tRNA(Glu) and tRNA(Gln). Serves as sulfur donor in tRNA 2-thiolation reaction by being thiocarboxylated (-COSH) at its C-terminus by the MOCS3 homolog UBA4. The sulfur is then transferred to tRNA to form 2-thiolation of mcm(5)S(2)U. Prior mcm(5) tRNA modification by the elongator complex is required for 2-thiolation. Also acts as a ubiquitin-like protein (UBL) that is covalently conjugated via an isopeptide bond to lysine residues of target proteins such as AHP1. The thiocarboxylated form serves as substrate for conjugation and oxidative stress specifically induces the formation of UBL-protein conjugates. In Mycosarcoma maydis (Corn smut fungus), this protein is Ubiquitin-related modifier 1.